The following is a 490-amino-acid chain: Betaine aldehyde dehydrogenase (490 aa).

K(+) is bound by residues serine 26, isoleucine 27, and aspartate 93. 150-152 (GAW) contacts NAD(+). Lysine 162 serves as the catalytic Charge relay system. NAD(+)-binding positions include 176–179 (KPSE) and 230–233 (GVET). Leucine 246 provides a ligand contact to K(+). Residue glutamate 252 is the Proton acceptor of the active site. Residues glycine 254, cysteine 286, and glutamate 387 each contribute to the NAD(+) site. Cysteine 286 acts as the Nucleophile in catalysis. Position 286 is a cysteine sulfenic acid (-SOH) (cysteine 286). 2 residues coordinate K(+): lysine 457 and glycine 460. Catalysis depends on glutamate 464, which acts as the Charge relay system.

It belongs to the aldehyde dehydrogenase family. As to quaternary structure, dimer of dimers. It depends on K(+) as a cofactor.

The catalysed reaction is betaine aldehyde + NAD(+) + H2O = glycine betaine + NADH + 2 H(+). Its pathway is amine and polyamine biosynthesis; betaine biosynthesis via choline pathway; betaine from betaine aldehyde: step 1/1. Involved in the biosynthesis of the osmoprotectant glycine betaine. Catalyzes the irreversible oxidation of betaine aldehyde to the corresponding acid. This Acinetobacter baumannii (strain SDF) protein is Betaine aldehyde dehydrogenase.